Reading from the N-terminus, the 1070-residue chain is DNA-directed RNA polymerase subunit beta (1070 aa).

It belongs to the RNA polymerase beta chain family. In terms of assembly, in plastids the minimal PEP RNA polymerase catalytic core is composed of four subunits: alpha, beta, beta', and beta''. When a (nuclear-encoded) sigma factor is associated with the core the holoenzyme is formed, which can initiate transcription.

The protein resides in the plastid. The enzyme catalyses RNA(n) + a ribonucleoside 5'-triphosphate = RNA(n+1) + diphosphate. DNA-dependent RNA polymerase catalyzes the transcription of DNA into RNA using the four ribonucleoside triphosphates as substrates. The sequence is that of DNA-directed RNA polymerase subunit beta from Cuscuta exaltata (Tall dodder).